Reading from the N-terminus, the 501-residue chain is ATP synthase subunit alpha, chloroplastic (501 aa).

170–177 (GDRQTGKT) serves as a coordination point for ATP.

It belongs to the ATPase alpha/beta chains family. As to quaternary structure, F-type ATPases have 2 components, CF(1) - the catalytic core - and CF(0) - the membrane proton channel. CF(1) has five subunits: alpha(3), beta(3), gamma(1), delta(1), epsilon(1). CF(0) has four main subunits: a, b, b' and c.

It is found in the plastid. Its subcellular location is the chloroplast thylakoid membrane. It catalyses the reaction ATP + H2O + 4 H(+)(in) = ADP + phosphate + 5 H(+)(out). In terms of biological role, produces ATP from ADP in the presence of a proton gradient across the membrane. The alpha chain is a regulatory subunit. The protein is ATP synthase subunit alpha, chloroplastic of Nephroselmis olivacea (Green alga).